We begin with the raw amino-acid sequence, 413 residues long: Palmitoyl-acyl carrier protein thioesterase, chloroplastic (413 aa).

The transit peptide at 1–57 directs the protein to the chloroplast; it reads MVATAVTSAFFPVTSSPDSSDSKNKKLGSIKSKPSVSSGSLQVKANAQAPPKINGTV. The disordered stretch occupies residues 12–79; sequence PVTSSPDSSD…DGASSPPPRT (68 aa). The span at 29-40 shows a compositional bias: low complexity; the sequence is SIKSKPSVSSGS. Active-site residues include Asn-310, His-312, and Cys-347. Residues 394-413 are disordered; it reads WRPKHAKSSANMDQITAKRA.

Belongs to the acyl-ACP thioesterase family.

It is found in the plastid. The protein resides in the chloroplast. It carries out the reaction hexadecanoyl-[ACP] + H2O = hexadecanoate + holo-[ACP] + H(+). In terms of biological role, plays an essential role in chain termination during de novo fatty acid synthesis. High thioesterase activity for palmitoyl-ACP versus other acyl-ACPs. In Gossypium hirsutum (Upland cotton), this protein is Palmitoyl-acyl carrier protein thioesterase, chloroplastic (FATB1).